A 373-amino-acid polypeptide reads, in one-letter code: 2-oxoglutarate oxidoreductase subunit KorB (373 aa).

The interval Thr-26–Asp-50 is disordered. The segment covering Pro-27–Pro-41 has biased composition (polar residues).

KG oxidoreductase (KOR) is composed of KorA and KorB subunits. Requires Mg(2+) as cofactor.

It carries out the reaction 2 oxidized [2Fe-2S]-[ferredoxin] + 2-oxoglutarate + CoA = succinyl-CoA + 2 reduced [2Fe-2S]-[ferredoxin] + CO2 + H(+). The protein operates within carbohydrate metabolism; tricarboxylic acid cycle. Component of KG oxidoreductase (KOR) that catalyzes the CoA-dependent oxidative decarboxylation of 2-oxoglutarate (alpha-ketoglutarate, KG) to succinyl-CoA. Methyl viologen can act as electron acceptor in vitro; the physiologic electron acceptor is unknown. Is involved in the alternative TCA pathway that functions concurrently with fatty acid beta-oxidation. Since a growing body of evidence indicates that lipids (for example cholesterol and fatty acids) are a predominant growth substrate for M.tuberculosis during infection, flux through KOR likely represents an important step in intermediary metabolism in vivo. KOR-dependent decarboxylation of KG also appears to be an important source of CO(2) in M.tuberculosis metabolism. The sequence is that of 2-oxoglutarate oxidoreductase subunit KorB (korB) from Mycobacterium tuberculosis (strain ATCC 25618 / H37Rv).